Consider the following 115-residue polypeptide: Nucleoid-associated protein PMN2A_1347 (115 aa).

Residues 89–115 are disordered; sequence STSTMKERMEDLTGGFKLNLPGMGEEN.

Belongs to the YbaB/EbfC family. Homodimer.

The protein localises to the cytoplasm. It localises to the nucleoid. Binds to DNA and alters its conformation. May be involved in regulation of gene expression, nucleoid organization and DNA protection. In Prochlorococcus marinus (strain NATL2A), this protein is Nucleoid-associated protein PMN2A_1347.